Reading from the N-terminus, the 292-residue chain is 5,10-methylenetetrahydrofolate reductase (292 aa).

E26 (proton donor/acceptor) is an active-site residue. T57 contacts NADH. FAD contacts are provided by Y58, A60, H86, R116, G117, D118, A130, Y150, H154, A157, D163, N166, R169, and K170. Residue D118 participates in (6S)-5-methyl-5,6,7,8-tetrahydrofolate binding. Position 181 (Q181) interacts with NADH. 3 residues coordinate (6S)-5-methyl-5,6,7,8-tetrahydrofolate: Q181, Q217, and R277.

The protein belongs to the methylenetetrahydrofolate reductase family. FAD serves as cofactor.

The enzyme catalyses (6S)-5-methyl-5,6,7,8-tetrahydrofolate + NAD(+) = (6R)-5,10-methylene-5,6,7,8-tetrahydrofolate + NADH + H(+). It functions in the pathway one-carbon metabolism; tetrahydrofolate interconversion. Its pathway is amino-acid biosynthesis; L-methionine biosynthesis via de novo pathway. Catalyzes the NADH-dependent reduction of 5,10-methylenetetrahydrofolate to 5-methyltetrahydrofolate. Is required to provide the methyl group necessary for methionine synthetase to convert homocysteine to methionine; the methyl group is given by 5-methyltetrahydrofolate. This chain is 5,10-methylenetetrahydrofolate reductase (metF), found in Haemophilus influenzae (strain ATCC 51907 / DSM 11121 / KW20 / Rd).